A 63-amino-acid chain; its full sequence is SLASKPCCDSCLCTRSIPPQCRCTDIGETCHSACKSCICTRSFPPQCRCSDITHFCYKPCTSS.

7 cysteine pairs are disulfide-bonded: C7–C60, C8–C23, C11–C56, C13–C21, C30–C37, C34–C49, and C39–C47.

As to quaternary structure, monomer.

In terms of biological role, inhibits trypsin stoichiometrically at the molar ratio of 1:2, with a dissociation constant of 4.2 nM. Does not inhibit chymotrypsin. The polypeptide is Bowman-Birk type proteinase inhibitor (Lupinus albus (White lupine)).